We begin with the raw amino-acid sequence, 235 residues long: Protein fmp52-1, mitochondrial (235 aa).

A mitochondrion-targeting transit peptide spans 1–36 (MANTALIGCTGMVGSFILNNLLAHPSVARVDTISRR).

Belongs to the FMP52 family.

It is found in the mitochondrion outer membrane. This is Protein fmp52-1, mitochondrial (fmp521) from Aspergillus oryzae (strain ATCC 42149 / RIB 40) (Yellow koji mold).